A 1555-amino-acid polypeptide reads, in one-letter code: MEENKSVAEGKAATGSLKESEETSAQNGELGEPEVQQTLKRTNSTESGGTGQKPPEEAPRRRFQIPRKSRDKRALQVISSGSREFEEILKILHSSYLDANSKASFSYKCARLVHNEFLEKEFTEKRRQLKFDGRLDKELVESYVFLLVDQEQMHSITEKGLHVGHSRMTTLGKPSMGVYLSRYADLLQANPLETGTTGDIFIFKVIKGKMKFVFDHIRNNQMDSFSGNGGLDPVPKHECHVLKNMNAVTALLGYRAFERTQYYFYEYGFDEVLKRPRHVCPYAVMSFGYKDELATRQPPLPTSGPVSFPTERSFDRSSFTLWRGQLLNKGKLLCYASLKSTSGPFIPYRLPERLDLDIVIKIEVIKKSIPAVLFYKETHNKPNEAKHGGIYSRLYEVVEKTRTGSHLQGLLQKIERENLALVKPLDDRGFMFLYFPSPMTSAYASAKTRLLHALFIYHESRLTQPVANVPVPPSFVPESHEFMPEVLTFVPALHFALHKSQSDTSADFNDVVEKHSRIYLKRRAEKLNKFKEYVLKPYDSRLDYKKSLYVAPRIKGHIESALRSYLFGSEAYTIPVDKAKEMLKENQRFQQFSPVSDYEPVEDDHDSNKYNKKCPVSYVETNSEKSSESTDWDIDKINGLINLIQKKKQSKPETDEPSGVGLKRKLDRQSEKAWKHRKCEENVHHDNEPGESAQSLISSLGGQDTDLRQETESLSSECIKMLLEKLADSCIDPAMAESLKTLKQNSTEELPSQKLKNLSQAHDTEREGAGQDQHIVYNDQTTDNQENTTCLSEEAQQAEGSHSDHSVLMEEKILDPPLESASPCPSNTAGNNCPAQGPNSLDLEMHWKLIPIAEANLTEEQLVYVSTEDALPNDPRAGHKRRGSRYSPLHETERQRPRHDRDYCRSLTTPSRTERNMLQSKHCHNGLIENTVLEVYNTFSEQLHDVLKQRDVPYMVPAAPPLLSSDDRVLKLSDCLCEQVSDICVQQYVDDLHTTLDSVVAAHINSCAVSRTGSPVTEIMAATEVHTFHPKQTVTEYPHVHEHFHVNDLHSDVREANPFSADHVYKVGEENAANGHALSHNSRDLSQETPEISTSGVTDLSEPHLAISNLINQMNPEVFNNLVKIITHVNKNSVKFYVHTEEENAICQNIKEYLLKLGNTECRPEKFLESKTKADKLLIIIQNEDIPNCIHRVPALVLLKRLPSVSFAGVDSLDDLKNHTYNEIFVSGGFIVSDESVLNPETVTIDELKKFLMFLEEINSPDANWQWKIHYKFHKRLKELGRLNTNALNILTLLTTYQKKNLVEILSYHLSCDPQNQQAPQLECLIKLQVQYMKQRHVLFLTEKDAARFPDYCDNGIVVTRMVDFMDNFSNLIGHHSPNNEEQRLSQLTNQGDETAPGEADSKEEEDMSLDSEDDTPPIEVCTDSWKPESQKQNISSLLELVDKDQTESPSTLNQGKTPTLDELQPITPVSVAGSTTGENSVSTGDELGSNTKDYNREVNLSHQFSHFSLLTHQTFLGSMYPTLTNPSQAEICFMNSYSQLTEPETSKNSERKQK.

Disordered regions lie at residues 1–74, 645–711, 744–773, 870–911, and 1390–1462; these read MEEN…DKRA, QKKK…RQET, QNST…GQDQ, ALPN…TTPS, and NQGD…PTLD. A compositionally biased stretch (polar residues) spans 35-47; it reads VQQTLKRTNSTES. Residues 61-71 are compositionally biased toward basic residues; it reads RRFQIPRKSRD. The segment covering 667 to 688 has biased composition (basic and acidic residues); the sequence is DRQSEKAWKHRKCEENVHHDNE. Composition is skewed to polar residues over residues 692-702 and 744-761; these read SAQSLISSLGG and QNST…LSQA. Basic and acidic residues predominate over residues 888-904; it reads PLHETERQRPRHDRDYC. Positions 1402-1417 are enriched in acidic residues; it reads SKEEEDMSLDSEDDTP. A compositionally biased stretch (polar residues) spans 1448-1458; the sequence is ESPSTLNQGKT.

This sequence belongs to the TASOR family. In terms of assembly, component of the HUSH complex.

It localises to the nucleus. It is found in the chromosome. Component of the HUSH complex, a multiprotein complex that mediates epigenetic repression. The HUSH complex is recruited to genomic loci rich in H3K9me3 and is probably required to maintain transcriptional silencing by promoting further deposition of H3K9me3. The sequence is that of Protein TASOR from Xenopus laevis (African clawed frog).